The sequence spans 110 residues: Tyrosine-protein phosphatase 3 (110 aa).

A Tyrosine-protein phosphatase domain is found at 1 to 110 (QKCATIVMVT…NPPHSGPIVV (110 aa)). Asp-80 contributes to the substrate binding site.

The protein belongs to the protein-tyrosine phosphatase family.

It carries out the reaction O-phospho-L-tyrosyl-[protein] + H2O = L-tyrosyl-[protein] + phosphate. The polypeptide is Tyrosine-protein phosphatase 3 (STY-3) (Styela plicata (Wrinkled sea squirt)).